Consider the following 592-residue polypeptide: UPF0329 protein ECU01_0110/ECU01_1500/ECU08_0040 (592 aa).

Composition is skewed to basic and acidic residues over residues 306–339 (RQRRREREIEKNMKELMRDEEKAKSKEKAKSKEK) and 353–362 (EAKEEEKKES). The segment at 306 to 404 (RQRRREREIE…RKRYKIHRRV (99 aa)) is disordered.

The protein belongs to the UPF0329 family.

The protein is UPF0329 protein ECU01_0110/ECU01_1500/ECU08_0040 of Encephalitozoon cuniculi (strain GB-M1) (Microsporidian parasite).